Consider the following 126-residue polypeptide: Protein ApaG (126 aa).

The 125-residue stretch at 2 to 126 (SDPRYQIDVS…FRLAVPGALH (125 aa)) folds into the ApaG domain.

This is Protein ApaG from Pseudomonas putida (strain ATCC 700007 / DSM 6899 / JCM 31910 / BCRC 17059 / LMG 24140 / F1).